Reading from the N-terminus, the 163-residue chain is Large ribosomal subunit protein uL10 (163 aa).

Belongs to the universal ribosomal protein uL10 family. As to quaternary structure, part of the ribosomal stalk of the 50S ribosomal subunit. The N-terminus interacts with L11 and the large rRNA to form the base of the stalk. The C-terminus forms an elongated spine to which L12 dimers bind in a sequential fashion forming a multimeric L10(L12)X complex.

In terms of biological role, forms part of the ribosomal stalk, playing a central role in the interaction of the ribosome with GTP-bound translation factors. The chain is Large ribosomal subunit protein uL10 from Histophilus somni (strain 129Pt) (Haemophilus somnus).